Consider the following 1315-residue polypeptide: DNA-directed RNA polymerase subunit beta' (1315 aa).

The Zn(2+) site is built by Cys-60, Cys-62, Cys-75, and Cys-78. Residues Asp-535, Asp-537, and Asp-539 each coordinate Mg(2+). Zn(2+) is bound by residues Cys-890, Cys-967, Cys-974, and Cys-977.

The protein belongs to the RNA polymerase beta' chain family. As to quaternary structure, the RNAP catalytic core consists of 2 alpha, 1 beta, 1 beta' and 1 omega subunit. When a sigma factor is associated with the core the holoenzyme is formed, which can initiate transcription. It depends on Mg(2+) as a cofactor. The cofactor is Zn(2+).

The catalysed reaction is RNA(n) + a ribonucleoside 5'-triphosphate = RNA(n+1) + diphosphate. Functionally, DNA-dependent RNA polymerase catalyzes the transcription of DNA into RNA using the four ribonucleoside triphosphates as substrates. This is DNA-directed RNA polymerase subunit beta' from Mycobacterium sp. (strain MCS).